The primary structure comprises 68 residues: Large ribosomal subunit protein bL31 (68 aa).

Residues C17, C19, C37, and C40 each coordinate Zn(2+).

It belongs to the bacterial ribosomal protein bL31 family. Type A subfamily. In terms of assembly, part of the 50S ribosomal subunit. Requires Zn(2+) as cofactor.

In terms of biological role, binds the 23S rRNA. The polypeptide is Large ribosomal subunit protein bL31 (Dehalococcoides mccartyi (strain CBDB1)).